The following is a 750-amino-acid chain: Photosystem I P700 chlorophyll a apoprotein A1 (750 aa).

8 helical membrane passes run 70-93, 156-179, 195-219, 291-309, 346-369, 385-411, 433-455, and 531-549; these read VFSA…FHGA, LYCT…FHYH, LNHH…HVSL, IVHH…GHMY, WHAQ…HHMY, LSLF…IFMV, AIIS…LYIH, and FLVH…LILL. [4Fe-4S] cluster contacts are provided by Cys-573 and Cys-582. Transmembrane regions (helical) follow at residues 589–610 and 664–686; these read HVFL…HFSW and LSAY…MFLF. Position 675 (His-675) interacts with chlorophyll a'. The chlorophyll a site is built by Met-683 and Tyr-691. Residue Trp-692 coordinates phylloquinone. A helical membrane pass occupies residues 724-744; the sequence is AVGVTHYLLGGIATTWAFFLA.

This sequence belongs to the PsaA/PsaB family. As to quaternary structure, the PsaA/B heterodimer binds the P700 chlorophyll special pair and subsequent electron acceptors. PSI consists of a core antenna complex that captures photons, and an electron transfer chain that converts photonic excitation into a charge separation. The eukaryotic PSI reaction center is composed of at least 11 subunits. It depends on P700 is a chlorophyll a/chlorophyll a' dimer, A0 is one or more chlorophyll a, A1 is one or both phylloquinones and FX is a shared 4Fe-4S iron-sulfur center. as a cofactor.

It localises to the plastid. The protein localises to the chloroplast thylakoid membrane. The enzyme catalyses reduced [plastocyanin] + hnu + oxidized [2Fe-2S]-[ferredoxin] = oxidized [plastocyanin] + reduced [2Fe-2S]-[ferredoxin]. In terms of biological role, psaA and PsaB bind P700, the primary electron donor of photosystem I (PSI), as well as the electron acceptors A0, A1 and FX. PSI is a plastocyanin-ferredoxin oxidoreductase, converting photonic excitation into a charge separation, which transfers an electron from the donor P700 chlorophyll pair to the spectroscopically characterized acceptors A0, A1, FX, FA and FB in turn. Oxidized P700 is reduced on the lumenal side of the thylakoid membrane by plastocyanin. This Piper cenocladum (Ant piper) protein is Photosystem I P700 chlorophyll a apoprotein A1.